We begin with the raw amino-acid sequence, 355 residues long: S-adenosylmethionine:tRNA ribosyltransferase-isomerase (355 aa).

This sequence belongs to the QueA family. Monomer.

It localises to the cytoplasm. The catalysed reaction is 7-aminomethyl-7-carbaguanosine(34) in tRNA + S-adenosyl-L-methionine = epoxyqueuosine(34) in tRNA + adenine + L-methionine + 2 H(+). Its pathway is tRNA modification; tRNA-queuosine biosynthesis. Its function is as follows. Transfers and isomerizes the ribose moiety from AdoMet to the 7-aminomethyl group of 7-deazaguanine (preQ1-tRNA) to give epoxyqueuosine (oQ-tRNA). This is S-adenosylmethionine:tRNA ribosyltransferase-isomerase from Burkholderia orbicola (strain MC0-3).